Reading from the N-terminus, the 307-residue chain is Oxygen-dependent coproporphyrinogen-III oxidase (307 aa).

Serine 99 is a substrate binding site. 2 residues coordinate a divalent metal cation: histidine 103 and histidine 113. Histidine 113 serves as the catalytic Proton donor. 115–117 (NVR) serves as a coordination point for substrate. Residues histidine 152 and histidine 182 each contribute to the a divalent metal cation site. The tract at residues 247-282 (YVEFNLVFDRGTLFGLQSGGRTESILMSMPPVANWR) is important for dimerization. 265 to 267 (GGR) is a substrate binding site.

Belongs to the aerobic coproporphyrinogen-III oxidase family. In terms of assembly, homodimer. Requires a divalent metal cation as cofactor.

It localises to the cytoplasm. It carries out the reaction coproporphyrinogen III + O2 + 2 H(+) = protoporphyrinogen IX + 2 CO2 + 2 H2O. It participates in porphyrin-containing compound metabolism; protoporphyrin-IX biosynthesis; protoporphyrinogen-IX from coproporphyrinogen-III (O2 route): step 1/1. Its function is as follows. Involved in the heme biosynthesis. Catalyzes the aerobic oxidative decarboxylation of propionate groups of rings A and B of coproporphyrinogen-III to yield the vinyl groups in protoporphyrinogen-IX. The sequence is that of Oxygen-dependent coproporphyrinogen-III oxidase from Burkholderia cenocepacia (strain ATCC BAA-245 / DSM 16553 / LMG 16656 / NCTC 13227 / J2315 / CF5610) (Burkholderia cepacia (strain J2315)).